A 197-amino-acid chain; its full sequence is MSNKKNDRRTQILQALAQMLESSPGARITTAALAKQVGVSEAALYRHFPSKAKMFEGLIEFIEESLFTRINRIVQEESNVIARIEMIVTLVLGFAEQNPGMCRLLTADALAGETERLRVRITQVFDRIETQLKQVIREADLKQGLRPAMGVAPCANFLIAIIEGKIRHYVRSEFKVKPMEIWPEQWTVLAQNLMLNR.

In terms of domain architecture, HTH tetR-type spans 6-66 (NDRRTQILQA…GLIEFIEESL (61 aa)). The segment at residues 29–48 (TTAALAKQVGVSEAALYRHF) is a DNA-binding region (H-T-H motif).

This sequence belongs to the nucleoid occlusion factor SlmA family. As to quaternary structure, homodimer. Interacts with FtsZ.

Its subcellular location is the cytoplasm. The protein resides in the nucleoid. Functionally, required for nucleoid occlusion (NO) phenomenon, which prevents Z-ring formation and cell division over the nucleoid. Acts as a DNA-associated cell division inhibitor that binds simultaneously chromosomal DNA and FtsZ, and disrupts the assembly of FtsZ polymers. SlmA-DNA-binding sequences (SBS) are dispersed on non-Ter regions of the chromosome, preventing FtsZ polymerization at these regions. The polypeptide is Nucleoid occlusion factor SlmA (Marinomonas sp. (strain MWYL1)).